Reading from the N-terminus, the 40-residue chain is Photosystem II reaction center protein J (40 aa).

Residues 8–28 (IPLWIIGTVAGILVIGLVGIF) form a helical membrane-spanning segment.

It belongs to the PsbJ family. As to quaternary structure, PSII is composed of 1 copy each of membrane proteins PsbA, PsbB, PsbC, PsbD, PsbE, PsbF, PsbH, PsbI, PsbJ, PsbK, PsbL, PsbM, PsbT, PsbX, PsbY, PsbZ, Psb30/Ycf12, at least 3 peripheral proteins of the oxygen-evolving complex and a large number of cofactors. It forms dimeric complexes.

The protein resides in the plastid. The protein localises to the chloroplast thylakoid membrane. Functionally, one of the components of the core complex of photosystem II (PSII). PSII is a light-driven water:plastoquinone oxidoreductase that uses light energy to abstract electrons from H(2)O, generating O(2) and a proton gradient subsequently used for ATP formation. It consists of a core antenna complex that captures photons, and an electron transfer chain that converts photonic excitation into a charge separation. This chain is Photosystem II reaction center protein J, found in Spinacia oleracea (Spinach).